We begin with the raw amino-acid sequence, 293 residues long: Acidic endochitinase (293 aa).

The signal sequence occupies residues 1-22 (MEKCFNIIPSLLLISLLIKSSN). One can recognise a GH18 domain in the interval 24–293 (AGIAVYWGQN…GYSNAIKGSV (270 aa)). 2 disulfides stabilise this stretch: cysteine 43/cysteine 90 and cysteine 73/cysteine 80. Glutamate 150 serves as the catalytic Proton donor. Cysteine 179 and cysteine 208 are disulfide-bonded.

The protein belongs to the glycosyl hydrolase 18 family. Chitinase class II subfamily.

The protein resides in the secreted. It localises to the extracellular space. It catalyses the reaction Random endo-hydrolysis of N-acetyl-beta-D-glucosaminide (1-&gt;4)-beta-linkages in chitin and chitodextrins.. In terms of biological role, this protein functions as a defense against chitin containing fungal pathogens. The sequence is that of Acidic endochitinase from Cicer arietinum (Chickpea).